The primary structure comprises 180 residues: NAD(P)H-quinone oxidoreductase subunit I, chloroplastic (180 aa).

4Fe-4S ferredoxin-type domains follow at residues 55 to 84 (GRIH…VDWR) and 95 to 124 (LNYS…MTEE). The [4Fe-4S] cluster site is built by Cys-64, Cys-67, Cys-70, Cys-74, Cys-104, Cys-107, Cys-110, and Cys-114.

Belongs to the complex I 23 kDa subunit family. In terms of assembly, NDH is composed of at least 16 different subunits, 5 of which are encoded in the nucleus. [4Fe-4S] cluster is required as a cofactor.

The protein localises to the plastid. Its subcellular location is the chloroplast thylakoid membrane. It catalyses the reaction a plastoquinone + NADH + (n+1) H(+)(in) = a plastoquinol + NAD(+) + n H(+)(out). It carries out the reaction a plastoquinone + NADPH + (n+1) H(+)(in) = a plastoquinol + NADP(+) + n H(+)(out). Its function is as follows. NDH shuttles electrons from NAD(P)H:plastoquinone, via FMN and iron-sulfur (Fe-S) centers, to quinones in the photosynthetic chain and possibly in a chloroplast respiratory chain. The immediate electron acceptor for the enzyme in this species is believed to be plastoquinone. Couples the redox reaction to proton translocation, and thus conserves the redox energy in a proton gradient. This is NAD(P)H-quinone oxidoreductase subunit I, chloroplastic from Dioscorea elephantipes (Elephant's foot yam).